Here is a 364-residue protein sequence, read N- to C-terminus: Dihydroorotate dehydrogenase (quinone) (364 aa).

Residues 62 to 66 and Thr-86 contribute to the FMN site; that span reads AGFDK. Position 66 (Lys-66) interacts with substrate. Substrate is bound at residue 111–115; that stretch reads NRMGF. FMN is bound by residues Asn-142 and Asn-175. Asn-175 lines the substrate pocket. The active-site Nucleophile is Ser-178. Asn-180 lines the substrate pocket. 2 residues coordinate FMN: Lys-216 and Thr-244. Position 245-246 (245-246) interacts with substrate; it reads NT. FMN contacts are provided by residues Gly-267, Gly-296, and 317–318; that span reads YT.

The protein belongs to the dihydroorotate dehydrogenase family. Type 2 subfamily. As to quaternary structure, monomer. FMN is required as a cofactor.

It localises to the cell membrane. It catalyses the reaction (S)-dihydroorotate + a quinone = orotate + a quinol. The protein operates within pyrimidine metabolism; UMP biosynthesis via de novo pathway; orotate from (S)-dihydroorotate (quinone route): step 1/1. Its function is as follows. Catalyzes the conversion of dihydroorotate to orotate with quinone as electron acceptor. This Anaeromyxobacter dehalogenans (strain 2CP-1 / ATCC BAA-258) protein is Dihydroorotate dehydrogenase (quinone).